The chain runs to 546 residues: MPDERGAIFTRREVVEFILDLVGYTEDRDLAQTKLLEPSAGHADFLLPIIGRLVRSYVAHGGDLTRGAQTLGPAIRAYEVHESSLETARSVVVAELLRLGVKKAAADGLGRTWLVRADFLMAPLPHTFDFVVGNPPYVRQELIPAVLLARYRARFKTLYDRADLYIPFYERCLDVLAPGGRLGFICTDRWTKNKYGGPLRAMVSEEFSLTHFVDLVDTQAFLSNVMTYPAITVIERPKPKSKARPTRVAYRPAISAEVFGPLAKAMTGTKLNHKAGVVEMSGVVNGSEPWILHQADRLALVRRLEETLPTLEEAGCKVGIGVATGNDGVYIGDMKTLNVEPSRKLPLARTQDLRGGSIDWQGKGVLNPFEEDGQVVDLASYPKFAAYLQEHAIQIKARHVAKKNPERWFRTIDRIYPALAKTPKLLVPDIKGDAHIVYEEGKLYPHHNLYFITANEWDLRALQAVLMSGVARLFVGTYSTTMRGGFLRFQAQYLRRIRVPHWKNVPKPLQKALREAAVAGDREAANRATYQLYGLNEAERDIVATV.

The protein belongs to the N(4)/N(6)-methyltransferase family.

The catalysed reaction is a 2'-deoxyadenosine in DNA + S-adenosyl-L-methionine = an N(6)-methyl-2'-deoxyadenosine in DNA + S-adenosyl-L-homocysteine + H(+). In terms of biological role, a gamma subtype methylase, recognizes the double-stranded sequence 5'-CTCGAG-3', methylates A-5 on both strands, and protects the DNA from cleavage by the XhoI endonuclease. The protein is Type II methyltransferase M.XhoI of Xanthomonas vasicola.